A 143-amino-acid polypeptide reads, in one-letter code: Large ribosomal subunit protein uL11 (143 aa).

Belongs to the universal ribosomal protein uL11 family. In terms of assembly, part of the ribosomal stalk of the 50S ribosomal subunit. Interacts with L10 and the large rRNA to form the base of the stalk. L10 forms an elongated spine to which L12 dimers bind in a sequential fashion forming a multimeric L10(L12)X complex. In terms of processing, one or more lysine residues are methylated.

Forms part of the ribosomal stalk which helps the ribosome interact with GTP-bound translation factors. The sequence is that of Large ribosomal subunit protein uL11 from Cupriavidus metallidurans (strain ATCC 43123 / DSM 2839 / NBRC 102507 / CH34) (Ralstonia metallidurans).